Reading from the N-terminus, the 250-residue chain is Protein KPLCE (250 aa).

In terms of tissue distribution, skin-specific.

The protein is Protein KPLCE of Homo sapiens (Human).